Consider the following 126-residue polypeptide: Small nuclear ribonucleoprotein Sm D3 (126 aa).

Ser2 carries the post-translational modification N-acetylserine. In terms of domain architecture, Sm spans 5–77; the sequence is VPIKVLHEAE…IRFLILPDML (73 aa). 5 consecutive repeat copies span residues 110-111, 112-113, 114-115, 116-117, and 118-119. Residues 110-119 form a 5 X 2 AA tandem repeats of [RM]-G; required for interaction with SMN1 region; that stretch reads RGRGRGMGRG.

It belongs to the snRNP core protein family. In terms of assembly, core component of the spliceosomal U1, U2, U4 and U5 small nuclear ribonucleoproteins (snRNPs), the building blocks of the spliceosome. Most spliceosomal snRNPs contain a common set of Sm proteins, SNRPB, SNRPD1, SNRPD2, SNRPD3, SNRPE, SNRPF and SNRPG that assemble in a heptameric protein ring on the Sm site of the small nuclear RNA to form the core snRNP. Component of the U1 snRNP. The U1 snRNP is composed of the U1 snRNA and the 7 core Sm proteins SNRPB, SNRPD1, SNRPD2, SNRPD3, SNRPE, SNRPF and SNRPG, and at least three U1 snRNP-specific proteins SNRNP70/U1-70K, SNRPA/U1-A and SNRPC/U1-C. Component of the U4/U6-U5 tri-snRNP complex composed of the U4, U6 and U5 snRNAs and at least PRPF3, PRPF4, PRPF6, PRPF8, PRPF31, SNRNP200, TXNL4A, SNRNP40, SNRPB, SNRPD1, SNRPD2, SNRPD3, SNRPE, SNRPF, SNRPG, DDX23, CD2BP2, PPIH, SNU13, EFTUD2, SART1 and USP39, plus LSM2, LSM3, LSM4, LSM5, LSM6, LSM7 and LSM8. Component of the U7 snRNP complex, or U7 Sm protein core complex, that is composed of the U7 snRNA and at least LSM10, LSM11, SNRPB, SNRPD3, SNRPE, SNRPF and SNRPG; the complex does not contain SNRPD1 and SNRPD2. Component of the minor spliceosome, which splices U12-type introns. Part of the SMN-Sm complex that contains SMN1, GEMIN2/SIP1, DDX20/GEMIN3, GEMIN4, GEMIN5, GEMIN6, GEMIN7, GEMIN8, STRAP/UNRIP and the Sm proteins SNRPB, SNRPD1, SNRPD2, SNRPD3, SNRPE, SNRPF and SNRPG; catalyzes core snRNPs assembly. Forms a 6S pICln-Sm complex composed of CLNS1A/pICln, SNRPD1, SNRPD2, SNRPE, SNRPF and SNRPG; ring-like structure where CLNS1A/pICln mimics additional Sm proteins and which is unable to assemble into the core snRNP. Interacts (via C-terminus) with SMN1 (via Tudor domain); the interaction is direct. Methylated on arginine residues by PRMT5 and PRMT7; probable asymmetric dimethylation which is required for assembly and biogenesis of snRNPs.

The protein localises to the cytoplasm. Its subcellular location is the cytosol. The protein resides in the nucleus. Its function is as follows. Plays a role in pre-mRNA splicing as a core component of the spliceosomal U1, U2, U4 and U5 small nuclear ribonucleoproteins (snRNPs), the building blocks of the spliceosome. Component of both the pre-catalytic spliceosome B complex and activated spliceosome C complexes. As a component of the minor spliceosome, involved in the splicing of U12-type introns in pre-mRNAs. As part of the U7 snRNP it is involved in histone pre-mRNA 3'-end processing. The polypeptide is Small nuclear ribonucleoprotein Sm D3 (SNRPD3) (Homo sapiens (Human)).